The primary structure comprises 325 residues: Homeobox protein Hox-A1a (325 aa).

Positions 187-192 (TFDWMK) match the Antp-type hexapeptide motif. Disordered stretches follow at residues 194–215 (KRNP…PNTV) and 264–325 (RMKQ…YPSN). A DNA-binding region (homeobox) is located at residues 212 to 271 (PNTVRTNFTTKQLTELEKEFHFNKYLTRARRVEIAAALQLNETQVKIWFQNRRMKQKKRE). Over residues 285-300 (SGERNQEKVEDGESEK) the composition is skewed to basic and acidic residues. The span at 301 to 317 (SVSAPSTPSPTSSTVSS) shows a compositional bias: low complexity.

Belongs to the Antp homeobox family. Labial subfamily.

The protein localises to the nucleus. Sequence-specific transcription factor which is part of a developmental regulatory system that provides cells with specific positional identities on the anterior-posterior axis. The chain is Homeobox protein Hox-A1a (hoxa1a) from Takifugu rubripes (Japanese pufferfish).